The primary structure comprises 196 residues: Pyridoxal 5'-phosphate synthase subunit PdxT (196 aa).

47-49 (GES) provides a ligand contact to L-glutamine. The active-site Nucleophile is the Cys-79. L-glutamine-binding positions include Arg-106 and 134-135 (IR). Residues His-170 and Glu-172 each act as charge relay system in the active site.

Belongs to the glutaminase PdxT/SNO family. In the presence of PdxS, forms a dodecamer of heterodimers. Only shows activity in the heterodimer.

The catalysed reaction is aldehydo-D-ribose 5-phosphate + D-glyceraldehyde 3-phosphate + L-glutamine = pyridoxal 5'-phosphate + L-glutamate + phosphate + 3 H2O + H(+). The enzyme catalyses L-glutamine + H2O = L-glutamate + NH4(+). It functions in the pathway cofactor biosynthesis; pyridoxal 5'-phosphate biosynthesis. In terms of biological role, catalyzes the hydrolysis of glutamine to glutamate and ammonia as part of the biosynthesis of pyridoxal 5'-phosphate. The resulting ammonia molecule is channeled to the active site of PdxS. This is Pyridoxal 5'-phosphate synthase subunit PdxT from Bacillus thuringiensis subsp. konkukian (strain 97-27).